A 245-amino-acid chain; its full sequence is NAD-dependent protein deacetylase (245 aa).

A Deacetylase sirtuin-type domain is found at 1-245; sequence MIFVQQFEEV…EFVEGLSSIK (245 aa). The NAD(+) site is built by Ala-26, Thr-30, Phe-37, Arg-38, Gln-105, Ile-107, Asp-108, and His-123. A nicotinamide-binding site is contributed by Phe-37. Residues Ile-107 and Asp-108 each contribute to the nicotinamide site. The active-site Proton acceptor is His-123. 4 residues coordinate Zn(2+): Cys-131, Cys-134, Cys-151, and Cys-154. 4 residues coordinate NAD(+): Thr-190, Ser-191, Asn-216, and Ile-234.

This sequence belongs to the sirtuin family. Class U subfamily. It depends on Zn(2+) as a cofactor.

It is found in the cytoplasm. The enzyme catalyses N(6)-acetyl-L-lysyl-[protein] + NAD(+) + H2O = 2''-O-acetyl-ADP-D-ribose + nicotinamide + L-lysyl-[protein]. Functionally, NAD-dependent protein deacetylase which modulates the activities of several enzymes which are inactive in their acetylated form. The sequence is that of NAD-dependent protein deacetylase from Bacillus thuringiensis subsp. konkukian (strain 97-27).